An 84-amino-acid chain; its full sequence is MSAEKSQNVQDVFLNFIRKNKTPVTIFLVNGVKLQGIVTWFDNFSVLLRRDGHTQLVYKHAISTVMPSTPISLFEPPIKENGEE.

The Sm domain occupies 11–71; that stretch reads DVFLNFIRKN…ISTVMPSTPI (61 aa).

It belongs to the Hfq family. As to quaternary structure, homohexamer.

In terms of biological role, RNA chaperone that binds small regulatory RNA (sRNAs) and mRNAs to facilitate mRNA translational regulation in response to envelope stress, environmental stress and changes in metabolite concentrations. Also binds with high specificity to tRNAs. The protein is RNA-binding protein Hfq of Paramagnetospirillum magneticum (strain ATCC 700264 / AMB-1) (Magnetospirillum magneticum).